The chain runs to 392 residues: uncharacterized protein (392 aa).

A run of 10 helical transmembrane segments spans residues 2 to 23, 38 to 60, 73 to 95, 153 to 175, 195 to 217, 237 to 259, 272 to 291, 297 to 319, 331 to 353, and 357 to 379; these read WLANFFVSASTTMIVPFLSLYI, SGYVFGITFLMAFLVSPFWGRFG, GTGIALSIFFMGFVTSVYQLFFL, FTYTFFITSFVIFSSVLLVLFGV, VLSYIFHHPALWVMMLLTMLIQT, VNLAFFSGMAFSATGLGSLLLAR, RILIGLLLAASFFFIPQALA, LLVFRFLFGMAMGGLLPCITAAI, VLGYNVSFRFLGNVLGPLLGGII, and FTISATFYVTAFLFFAGACMLWI.

It belongs to the major facilitator superfamily.

Its subcellular location is the cell membrane. This is an uncharacterized protein from Bacillus subtilis (strain 168).